We begin with the raw amino-acid sequence, 238 residues long: Ubiquinone biosynthesis O-methyltransferase (238 aa).

S-adenosyl-L-methionine contacts are provided by Arg-38, Gly-57, Asp-78, and Leu-124.

The protein belongs to the methyltransferase superfamily. UbiG/COQ3 family.

It carries out the reaction a 3-demethylubiquinol + S-adenosyl-L-methionine = a ubiquinol + S-adenosyl-L-homocysteine + H(+). It catalyses the reaction a 3-(all-trans-polyprenyl)benzene-1,2-diol + S-adenosyl-L-methionine = a 2-methoxy-6-(all-trans-polyprenyl)phenol + S-adenosyl-L-homocysteine + H(+). Its pathway is cofactor biosynthesis; ubiquinone biosynthesis. Its function is as follows. O-methyltransferase that catalyzes the 2 O-methylation steps in the ubiquinone biosynthetic pathway. The sequence is that of Ubiquinone biosynthesis O-methyltransferase from Marinobacter nauticus (strain ATCC 700491 / DSM 11845 / VT8) (Marinobacter aquaeolei).